The primary structure comprises 402 residues: Nicotinate phosphoribosyltransferase (402 aa).

Histidine 224 is subject to Phosphohistidine; by autocatalysis.

Belongs to the NAPRTase family. In terms of processing, transiently phosphorylated on a His residue during the reaction cycle. Phosphorylation strongly increases the affinity for substrates and increases the rate of nicotinate D-ribonucleotide production. Dephosphorylation regenerates the low-affinity form of the enzyme, leading to product release.

It carries out the reaction nicotinate + 5-phospho-alpha-D-ribose 1-diphosphate + ATP + H2O = nicotinate beta-D-ribonucleotide + ADP + phosphate + diphosphate. The protein operates within cofactor biosynthesis; NAD(+) biosynthesis; nicotinate D-ribonucleotide from nicotinate: step 1/1. Its function is as follows. Catalyzes the synthesis of beta-nicotinate D-ribonucleotide from nicotinate and 5-phospho-D-ribose 1-phosphate at the expense of ATP. The protein is Nicotinate phosphoribosyltransferase of Neisseria gonorrhoeae (strain ATCC 700825 / FA 1090).